Reading from the N-terminus, the 236-residue chain is 2,3,4,5-tetrahydropyridine-2,6-dicarboxylate N-acetyltransferase (236 aa).

The protein belongs to the transferase hexapeptide repeat family. DapH subfamily.

It carries out the reaction (S)-2,3,4,5-tetrahydrodipicolinate + acetyl-CoA + H2O = L-2-acetamido-6-oxoheptanedioate + CoA. Its pathway is amino-acid biosynthesis; L-lysine biosynthesis via DAP pathway; LL-2,6-diaminopimelate from (S)-tetrahydrodipicolinate (acetylase route): step 1/3. Its function is as follows. Catalyzes the transfer of an acetyl group from acetyl-CoA to tetrahydrodipicolinate. This is 2,3,4,5-tetrahydropyridine-2,6-dicarboxylate N-acetyltransferase from Clostridium botulinum (strain ATCC 19397 / Type A).